A 445-amino-acid chain; its full sequence is Methylenetetrahydrofolate--tRNA-(uracil-5-)-methyltransferase TrmFO (445 aa).

An FAD-binding site is contributed by 9–14; the sequence is GGGLAG.

This sequence belongs to the MnmG family. TrmFO subfamily. Requires FAD as cofactor.

The protein localises to the cytoplasm. The catalysed reaction is uridine(54) in tRNA + (6R)-5,10-methylene-5,6,7,8-tetrahydrofolate + NADH + H(+) = 5-methyluridine(54) in tRNA + (6S)-5,6,7,8-tetrahydrofolate + NAD(+). It catalyses the reaction uridine(54) in tRNA + (6R)-5,10-methylene-5,6,7,8-tetrahydrofolate + NADPH + H(+) = 5-methyluridine(54) in tRNA + (6S)-5,6,7,8-tetrahydrofolate + NADP(+). Its function is as follows. Catalyzes the folate-dependent formation of 5-methyl-uridine at position 54 (M-5-U54) in all tRNAs. In Aquifex aeolicus (strain VF5), this protein is Methylenetetrahydrofolate--tRNA-(uracil-5-)-methyltransferase TrmFO.